The chain runs to 80 residues: Lantibiotic Flvalpha.b (80 aa).

Positions 1 to 38 (MNKNPIYRSEEEAKNIACGNVAAELDENSQALDAINGA) are cleaved as a propeptide — cleaved by FlvT. 2 positions are modified to 2,3-didehydrobutyrine; by FlvM1: threonine 43 and threonine 47. The segment at residues 52–55 (TVGC) is a cross-link (beta-methyllanthionine (Thr-Cys); by FlvM1). Residues 58–68 (SYGLGNGGYCC) constitute a cross-link (lanthionine (Ser-Cys); by FlvM1). 2 cross-links (beta-methyllanthionine (Thr-Cys); by FlvM1) span residues 69–74 (TYTVEC) and 71–78 (TVECSKTC).

Post-translationally, the lanthionine formed by Ser-58 and Cys-68 forms a putative lipid II binding motif. In terms of processing, maturation of FlvA1 peptides involves the enzymatic conversion of Thr, and Ser into dehydrated AA and the formation of thioether bonds with cysteines. Modifications are processed by the flavecin synthetase FlvM1. This is followed by membrane translocation and cleavage of the modified precursor. Contains DL-lanthionine and DL-beta-methyllanthionine, when coepressed in E.coli with the flavecin synthetase FlvM1.

Its subcellular location is the secreted. Functionally, lanthionine-containing peptide antibiotic (lantibiotic) only active on Gram-positive bacteria in synergy with Flvbeta peptides, which are encoded by the same operon than Flvalpha.a. Shows antibacterial activity in synergy with Flvbeta.b, Flvbeta.c, Flvbeta.e and Flvbeta.g. Does not show antibacterial activity when tested with Flvbeta.a, Flvbeta.d, Flvbeta.f and Flvbeta.h. The bactericidal activity of lantibiotics is based on depolarization of energized bacterial cytoplasmic membranes, initiated by the formation of aqueous transmembrane pores. This chain is Lantibiotic Flvalpha.b, found in Ruminococcus flavefaciens.